The chain runs to 162 residues: tRNA (cytidine(34)-2'-O)-methyltransferase (162 aa).

Residues leucine 83, glycine 105, isoleucine 127, and serine 135 each contribute to the S-adenosyl-L-methionine site.

Belongs to the class IV-like SAM-binding methyltransferase superfamily. RNA methyltransferase TrmH family. TrmL subfamily. In terms of assembly, homodimer.

The protein resides in the cytoplasm. It carries out the reaction cytidine(34) in tRNA + S-adenosyl-L-methionine = 2'-O-methylcytidine(34) in tRNA + S-adenosyl-L-homocysteine + H(+). The catalysed reaction is 5-carboxymethylaminomethyluridine(34) in tRNA(Leu) + S-adenosyl-L-methionine = 5-carboxymethylaminomethyl-2'-O-methyluridine(34) in tRNA(Leu) + S-adenosyl-L-homocysteine + H(+). Methylates the ribose at the nucleotide 34 wobble position in the two leucyl isoacceptors tRNA(Leu)(CmAA) and tRNA(Leu)(cmnm5UmAA). Catalyzes the methyl transfer from S-adenosyl-L-methionine to the 2'-OH of the wobble nucleotide. The chain is tRNA (cytidine(34)-2'-O)-methyltransferase from Photorhabdus asymbiotica subsp. asymbiotica (strain ATCC 43949 / 3105-77) (Xenorhabdus luminescens (strain 2)).